Reading from the N-terminus, the 128-residue chain is VHWTAEEKALVNVVWSKTDHQAVVANALGRLFVVYPWTKRYFAGDSAVQTHAGKVVSALTLAYNHIDDVKPHKHYEGFHVDPENFRLLANCLNVELGHTLHKEFTPELHAAWNKFSNVVVDALSKGYH.

The region spanning 2–128 is the Globin domain; it reads HWTAEEKALV…VVDALSKGYH (127 aa). Positions 51 and 74 each coordinate heme b.

Belongs to the globin family. In terms of assembly, hb 1 is a heterotetramer of two alpha and two beta-1 chains. As to expression, red blood cells (at protein level).

In terms of biological role, involved in oxygen transport from gills to the various peripheral tissues. The sequence is that of Hemoglobin subunit beta-1 from Somniosus microcephalus (Greenland sleeper shark).